The following is a 252-amino-acid chain: Neurexophilin-3 (252 aa).

Positions 1-22 are cleaved as a signal peptide; it reads MQLTRCCFVFLVQGSLYLVICG. The interval 23–75 is II; it reads QDDGPPGSEDPERDDHEGQPRPRVPRKRGHISPKSRPMANSTLLGLLAPPGEA. Residues 27–58 form a disordered region; it reads PPGSEDPERDDHEGQPRPRVPRKRGHISPKSR. Residues 45–55 are compositionally biased toward basic residues; it reads RVPRKRGHISP. Asn-62, Asn-127, Asn-137, and Asn-143 each carry an N-linked (GlcNAc...) asparagine glycan. The segment at 76 to 157 is III; sequence WGILGQPPNR…LVPPSKAVEF (82 aa). Residues 158 to 166 are IV (linker domain); that stretch reads HQEQQIFIE. Positions 167–252 are v (Cys-rich); sequence AKASKIFNCR…HSDTPYYPSG (86 aa).

This sequence belongs to the neurexophilin family. In terms of processing, may be proteolytically processed at the boundary between the N-terminal non-conserved and the central conserved domain in neuron-like cells. Highest level in brain.

It localises to the secreted. Functionally, may be signaling molecules that resemble neuropeptides. Ligand for alpha-neurexins. The protein is Neurexophilin-3 (NXPH3) of Homo sapiens (Human).